Here is a 130-residue protein sequence, read N- to C-terminus: Small ribosomal subunit protein uS9 (130 aa).

This sequence belongs to the universal ribosomal protein uS9 family.

The sequence is that of Small ribosomal subunit protein uS9 from Colwellia psychrerythraea (strain 34H / ATCC BAA-681) (Vibrio psychroerythus).